The sequence spans 358 residues: Cytoplasmic tRNA 2-thiolation protein 1 (358 aa).

The protein belongs to the TtcA family. CTU1/NCS6/ATPBD3 subfamily.

The protein resides in the cytoplasm. It functions in the pathway tRNA modification; 5-methoxycarbonylmethyl-2-thiouridine-tRNA biosynthesis. Its function is as follows. Plays a central role in 2-thiolation of mcm(5)S(2)U at tRNA wobble positions of tRNA(Lys), tRNA(Glu) and tRNA(Gln). Directly binds tRNAs and probably acts by catalyzing adenylation of tRNAs, an intermediate required for 2-thiolation. It is unclear whether it acts as a sulfurtransferase that transfers sulfur from thiocarboxylated URM1 onto the uridine of tRNAs at wobble position. Prior mcm(5) tRNA modification by the elongator complex is required for 2-thiolation. May also be involved in protein urmylation. This chain is Cytoplasmic tRNA 2-thiolation protein 1, found in Candida glabrata (strain ATCC 2001 / BCRC 20586 / JCM 3761 / NBRC 0622 / NRRL Y-65 / CBS 138) (Yeast).